The following is a 379-amino-acid chain: Probable leucine aminopeptidase ARB_01443 (379 aa).

The first 18 residues, 1–18 (MKIATLAVVSAFAATAIA), serve as a signal peptide directing secretion. Zn(2+) contacts are provided by histidine 182 and aspartate 201. Asparagine 202 and asparagine 226 each carry an N-linked (GlcNAc...) asparagine glycan. Zn(2+) is bound by residues glutamate 240 and aspartate 267. Cysteine 312 and cysteine 316 are oxidised to a cystine. Position 345 (histidine 345) interacts with Zn(2+).

This sequence belongs to the peptidase M28 family. M28E subfamily. As to quaternary structure, monomer. It depends on Zn(2+) as a cofactor.

It is found in the secreted. In terms of biological role, probable extracellular aminopeptidase which contributes to pathogenicity. This Arthroderma benhamiae (strain ATCC MYA-4681 / CBS 112371) (Trichophyton mentagrophytes) protein is Probable leucine aminopeptidase ARB_01443.